We begin with the raw amino-acid sequence, 336 residues long: Hdr-like menaquinol oxidoreductase cytochrome b-like subunit (336 aa).

Transmembrane regions (helical) follow at residues A4–I24, I60–F80, W102–L122, V145–L165, H184–I204, and L232–F252.

It localises to the cell membrane. Has menaquinol-oxidizing activity. The HmeC and HmeD subunits may together mediate electron transfer from menaquinol to an unidentified electron acceptor on the cytoplasmic side of the membrane. This Archaeoglobus profundus (strain DSM 5631 / JCM 9629 / NBRC 100127 / Av18) protein is Hdr-like menaquinol oxidoreductase cytochrome b-like subunit (hmeC).